The primary structure comprises 379 residues: Putative acetyl-CoA C-acetyltransferase VraB (379 aa).

Cysteine 86 serves as the catalytic Acyl-thioester intermediate. The active-site Proton acceptor is the histidine 338.

This sequence belongs to the thiolase-like superfamily. Thiolase family.

This chain is Putative acetyl-CoA C-acetyltransferase VraB (vraB), found in Staphylococcus aureus (strain Mu3 / ATCC 700698).